The chain runs to 345 residues: Glycerol-3-phosphate dehydrogenase [NAD(P)+] (345 aa).

Residues S11, W12, H32, R33, and K106 each contribute to the NADPH site. 3 residues coordinate sn-glycerol 3-phosphate: K106, G137, and S139. A141 contributes to the NADPH binding site. Residues K192, D245, S255, R256, and N257 each coordinate sn-glycerol 3-phosphate. Residue K192 is the Proton acceptor of the active site. R256 contacts NADPH. The NADPH site is built by V280 and E282.

It belongs to the NAD-dependent glycerol-3-phosphate dehydrogenase family.

The protein resides in the cytoplasm. It catalyses the reaction sn-glycerol 3-phosphate + NAD(+) = dihydroxyacetone phosphate + NADH + H(+). The catalysed reaction is sn-glycerol 3-phosphate + NADP(+) = dihydroxyacetone phosphate + NADPH + H(+). The protein operates within membrane lipid metabolism; glycerophospholipid metabolism. Functionally, catalyzes the reduction of the glycolytic intermediate dihydroxyacetone phosphate (DHAP) to sn-glycerol 3-phosphate (G3P), the key precursor for phospholipid synthesis. The sequence is that of Glycerol-3-phosphate dehydrogenase [NAD(P)+] from Bacillus velezensis (strain DSM 23117 / BGSC 10A6 / LMG 26770 / FZB42) (Bacillus amyloliquefaciens subsp. plantarum).